The primary structure comprises 200 residues: uncharacterized protein (200 aa).

A signal peptide spans 1 to 19; that stretch reads MNAMFHSLFALSFVSLVAS. Residues 148-168 traverse the membrane as a helical segment; sequence FMVIVSLAAFCISVLAGLALQ.

It is found in the membrane. This is an uncharacterized protein from Caenorhabditis elegans.